Consider the following 280-residue polypeptide: uncharacterized protein (280 aa).

The first 21 residues, 1-21 (MRPVIKVGLSTASVYPLRAEA), serve as a signal peptide directing secretion.

It to M.tuberculosis Rv0498 and S.coelicolor SCO3347.

This is an uncharacterized protein from Mycobacterium leprae (strain TN).